We begin with the raw amino-acid sequence, 639 residues long: Extracellular metalloproteinase 9 (639 aa).

The signal sequence occupies residues M1–G19. Residues H20 to D250 constitute a propeptide that is removed on maturation. N-linked (GlcNAc...) asparagine glycosylation is present at N278. A disordered region spans residues P293–Y312. H434 lines the Zn(2+) pocket. Residue E435 is part of the active site. Residue H438 coordinates Zn(2+).

The protein belongs to the peptidase M36 family. It depends on Zn(2+) as a cofactor.

The protein localises to the secreted. Functionally, secreted metalloproteinase that allows assimilation of proteinaceous substrates and probably acts as a virulence factor. This chain is Extracellular metalloproteinase 9 (MEP9), found in Coccidioides posadasii (strain C735) (Valley fever fungus).